The following is a 427-amino-acid chain: Glutamate-1-semialdehyde 2,1-aminomutase (427 aa).

An N6-(pyridoxal phosphate)lysine modification is found at K265.

The protein belongs to the class-III pyridoxal-phosphate-dependent aminotransferase family. HemL subfamily. Homodimer. Pyridoxal 5'-phosphate is required as a cofactor.

The protein localises to the cytoplasm. The enzyme catalyses (S)-4-amino-5-oxopentanoate = 5-aminolevulinate. The protein operates within porphyrin-containing compound metabolism; protoporphyrin-IX biosynthesis; 5-aminolevulinate from L-glutamyl-tRNA(Glu): step 2/2. This Shewanella amazonensis (strain ATCC BAA-1098 / SB2B) protein is Glutamate-1-semialdehyde 2,1-aminomutase.